The following is a 304-amino-acid chain: UDP-N-acetylenolpyruvoylglucosamine reductase (304 aa).

One can recognise an FAD-binding PCMH-type domain in the interval 34 to 198; that stretch reads IGGKADFLVW…LEVVFALRPG (165 aa). R177 is an active-site residue. The Proton donor role is filled by S227. Residue E297 is part of the active site.

Belongs to the MurB family. Requires FAD as cofactor.

It localises to the cytoplasm. The catalysed reaction is UDP-N-acetyl-alpha-D-muramate + NADP(+) = UDP-N-acetyl-3-O-(1-carboxyvinyl)-alpha-D-glucosamine + NADPH + H(+). It participates in cell wall biogenesis; peptidoglycan biosynthesis. Functionally, cell wall formation. This Geobacillus kaustophilus (strain HTA426) protein is UDP-N-acetylenolpyruvoylglucosamine reductase.